A 113-amino-acid chain; its full sequence is Cell cycle protein GpsB (113 aa).

A coiled-coil region spans residues 37-63 (KDYETYATLVKSLRQEIADLKEELTRK). The interval 61-82 (TRKPQVSSAPSPSHPDPIDVAA) is disordered.

It belongs to the GpsB family. In terms of assembly, forms polymers through the coiled coil domains. Interacts with PBP1, MreC and EzrA.

It localises to the cytoplasm. In terms of biological role, divisome component that associates with the complex late in its assembly, after the Z-ring is formed, and is dependent on DivIC and PBP2B for its recruitment to the divisome. Together with EzrA, is a key component of the system that regulates PBP1 localization during cell cycle progression. Its main role could be the removal of PBP1 from the cell pole after pole maturation is completed. Also contributes to the recruitment of PBP1 to the division complex. Not essential for septum formation. The polypeptide is Cell cycle protein GpsB (Streptococcus pneumoniae (strain ATCC 700669 / Spain 23F-1)).